Reading from the N-terminus, the 369-residue chain is Short chain dehydrogenase rstn4 (369 aa).

Residues lysine 88, aspartate 111, asparagine 138, tyrosine 234, and lysine 238 each contribute to the NADP(+) site. Tyrosine 234 serves as the catalytic Proton donor. The Lowers pKa of active site Tyr role is filled by lysine 238.

Belongs to the short-chain dehydrogenases/reductases (SDR) family.

The protein operates within antifungal biosynthesis. In terms of biological role, short chain dehydrogenase; part of the gene cluster that mediates the biosynthesis of the tetrahydropyranyl antifungal agent restricticin that acts as an inhibitor of CYP51 and blocks the ergosterol biosynthesis. The highly reducing polyketide synthase rstn3, the short chain dehydrogenase rstn4, the cyclase rstn5, the FAD-dependent monooxygenase rstn6 and the enoylreductase rstn7 are required to generate the first stable intermediate desmethylrestrictinol. Rstn3 with rstn7 biosynthesize the first polyketide chain intermediate that is reduced by rstn4, followed by epoxidation by rstn6 before 6-endo cyclization via epoxide opening by rstn5 leads to desmethylrestrictinol. The methyltransferase rstn1 then catalyzes the C4 O-methylation of desmethylrestrictinol to produce restrictinol, and the nonribosomal peptide synthetase rstn8 catalyzes the C3 esterification of restrictinol with glycine that leads to restricticin. This is Short chain dehydrogenase rstn4 from Aspergillus nomiae NRRL (strain ATCC 15546 / NRRL 13137 / CBS 260.88 / M93).